Reading from the N-terminus, the 446-residue chain is Exodeoxyribonuclease 7 large subunit (446 aa).

The protein belongs to the XseA family. As to quaternary structure, heterooligomer composed of large and small subunits.

The protein localises to the cytoplasm. The catalysed reaction is Exonucleolytic cleavage in either 5'- to 3'- or 3'- to 5'-direction to yield nucleoside 5'-phosphates.. In terms of biological role, bidirectionally degrades single-stranded DNA into large acid-insoluble oligonucleotides, which are then degraded further into small acid-soluble oligonucleotides. The chain is Exodeoxyribonuclease 7 large subunit from Streptococcus agalactiae serotype III (strain NEM316).